The following is a 327-amino-acid chain: GrpE protein homolog 2, mitochondrial (327 aa).

The transit peptide at 1–39 directs the protein to the mitochondrion; sequence MLVLRILSRVTRNAGIRSSLSAVTLPARNQTPVFSSRFH. The segment at 68–140 is disordered; that stretch reads SSSTSPESDE…DSESDDDELS (73 aa). 2 stretches are compositionally biased toward basic and acidic residues: residues 75 to 93 and 103 to 113; these read SDEK…EKPT and SESKDSVTDSA. The segment covering 130–140 has biased composition (acidic residues); the sequence is SDSESDDDELS.

It belongs to the GrpE family. Probable component of the PAM complex, at least composed of SSC1 (mtHsp70), MGE1, TIM44, PAM16/TIM16, PAM17 and PAM18/TIM14. Interacts with SSQ1.

Its subcellular location is the mitochondrion matrix. Essential component of the PAM complex, a complex required for the translocation of transit peptide-containing proteins from the inner membrane into the mitochondrial matrix in an ATP-dependent manner. Seems to control the nucleotide-dependent binding of mitochondrial HSP70 to substrate proteins. Binds ATP. Interacts with copper ions Cu(2+). Confers thermotolerance to long-term exposure at moderately high temperature (TMHT at 35 degrees Celsius). The sequence is that of GrpE protein homolog 2, mitochondrial from Arabidopsis thaliana (Mouse-ear cress).